A 13041-amino-acid chain; its full sequence is Nonribosomal peptide synthetase kk1B (13041 aa).

An adenylation 1 region spans residues 267–663; the sequence is ANRVVDTPQK…GRRDSQIKIR (397 aa). Residues 788–864 form the Carrier 1 domain; that stretch reads ASLMTEGITL…GLINVMQQSS (77 aa). An O-(pantetheine 4'-phosphoryl)serine modification is found at serine 825. Residues 882-1313 form a condensation 1 region; sequence SFAQGRLWFL…TPIAHLQLTD (432 aa). The adenylation 2 stretch occupies residues 1341 to 1736; that stretch reads FQKQVAACPN…GRMDFQIKIR (396 aa). Residues 1865–1939 enclose the Carrier 2 domain; the sequence is AARNEIEAVL…NLAATIKRGS (75 aa). Serine 1899 carries the O-(pantetheine 4'-phosphoryl)serine modification. Residues 1957–2383 form a condensation 2 region; sequence SFAQGRLWFL…DQPQTPLALL (427 aa). Positions 2418 to 2812 are adenylation 3; it reads QVAASPNATA…GRMDQQIKIR (395 aa). Residues 2891-3023 are methyltransferase (M) domain 1; that stretch reads VGNDFMGWTS…EYLSKVLYAL (133 aa). A Carrier 3 domain is found at 3353–3427; that stretch reads GARNETEAVL…DLAASIRRGS (75 aa). Serine 3387 carries the O-(pantetheine 4'-phosphoryl)serine modification. A condensation 3 region spans residues 3445–3869; it reads SFAQGRLWFL…DQPQIPIAVL (425 aa). An adenylation 4 region spans residues 3901–4300; that stretch reads FRAQVVACPD…GRMDQQVKIR (400 aa). Residues 4412–4486 enclose the Carrier 4 domain; that stretch reads PPRNEIETIL…NLAAAVQRGS (75 aa). An O-(pantetheine 4'-phosphoryl)serine modification is found at serine 4446. A condensation 4 region spans residues 4504–4935; sequence SFAQGRLWFL…TPIAALSLTD (432 aa). The segment at 4963-5362 is adenylation 5; it reads FREQVATYPD…GRMDRQLKIR (400 aa). Residues 5430–5567 form a methyltransferase (M) domain 2 region; sequence TYAELDTLVK…VAQYFPTPEY (138 aa). Positions 5897–5971 constitute a Carrier 5 domain; sequence QPRNEVEAVL…DLAAAIQRGS (75 aa). Serine 5931 is subject to O-(pantetheine 4'-phosphoryl)serine. Residues 5989–6416 are condensation 5; the sequence is SYAQGRLWFL…DQPQTPLALL (428 aa). Residues 6451–6845 form an adenylation 6 region; the sequence is QVAASPNATA…GRMDQQIKIR (395 aa). Residues 6924–7056 form a methyltransferase (M) domain 3 region; it reads VGNDFMGWTS…EYLSKVLYAL (133 aa). The Carrier 6 domain occupies 7386-7460; sequence GARNEIEAAL…DLAGAVQRGS (75 aa). At serine 7420 the chain carries O-(pantetheine 4'-phosphoryl)serine. Positions 7478–7901 are condensation 6; that stretch reads SFAQGRLWFL…GLETPRLPIS (424 aa). The interval 7934–8335 is adenylation 7; that stretch reads FRTQVAASPD…GRMDRQLKIR (402 aa). The methyltransferase (M) domain 4 stretch occupies residues 8404–8540; it reads YAEIEEIDSS…AQYFPSPEYL (137 aa). A Carrier 7 domain is found at 8871–8945; sequence GPRNEIEALL…DLAASIQRGS (75 aa). Residue serine 8905 is modified to O-(pantetheine 4'-phosphoryl)serine. The tract at residues 8963-9392 is condensation 7; that stretch reads SFAQGRLWFL…PKTPIAVLPL (430 aa). Residues 9422-9822 are adenylation 8; the sequence is FRQQVAARPD…SRMDQQVKIR (401 aa). The Carrier 8 domain maps to 9943 to 10017; that stretch reads PPTNDMERIL…DLASTIKQDS (75 aa). Serine 9977 is modified (O-(pantetheine 4'-phosphoryl)serine). The condensation 8 stretch occupies residues 10035–10462; that stretch reads SFAQGRLWFL…ETPQTPLAVL (428 aa). Positions 10494–10892 are adenylation 9; sequence FRAQVAACPD…GRMDQQIKIR (399 aa). Residues 10959–11105 are methyltransferase (M) domain 5; sequence IYAEIEEIDS…EYLADVVGAL (147 aa). The 75-residue stretch at 11428–11502 folds into the Carrier 9 domain; sequence SARNEVEAVL…DLAASIERNS (75 aa). Serine 11462 is modified (O-(pantetheine 4'-phosphoryl)serine). The tract at residues 11520-11945 is condensation 9; it reads SFAQGRLWFL…EQPQTPIAVL (426 aa). Residues 11977-12377 are adenylation 10; that stretch reads FRDQVAANPR…GRMDQQIKIR (401 aa). The 75-residue stretch at 12495-12569 folds into the Carrier 10 domain; that stretch reads VPRNELEASL…DLALKVSSYI (75 aa). Residue serine 12529 is modified to O-(pantetheine 4'-phosphoryl)serine. The tract at residues 12647-13032 is condensation 10; that stretch reads FPANADCDKI…RMHEEFCDII (386 aa).

This sequence belongs to the NRP synthetase family.

The protein operates within secondary metabolite biosynthesis. Its function is as follows. Nonribosomal peptide synthetase; part of the gene cluster that mediates the biosynthesis of KK-1, a novel cyclic depsipeptide with 10 residues which is a promising active compound with high activity against many plant pathogens, especially Botrytis cinerea. The nonribosomal peptide synthetase (NRPS) kk1B catalyzes the elongation and cyclization of the decapeptide chain composed of 1 D-lactic acid residue (D-Lac), 1 pipecolic acid residue (Pip), 1 aspartic acid residue (Asp), 1 isoleucine residue (Ile), 1 glycine residue (Gly), 1 tyrosine residue (Tyr) and 4 valine residues (Val). The Asp, Ile and 3 Val residues are N-methylated by the 5 methyltransferase domains from the NRPS (found in modules 3, 5, 6, 7 and 9), whereas the Tyr residue is O-methylated by the cluster encoded O-methyltransferase kk1A. Cyclization with the hydroxy group of the D-lactic acid as a nucleophile is presumed to occur in the final module of NRPS, resulting in the formation of the depsipeptide ester bond through macrocyclization by the C-terminal C domain. The thioesterase kk1J is likely to be involved in the corrective mechanism of peptide chain synthesis. The D-lactate dehydrogenase kk1H is involved in the synthesis of D-lactic acid from pyruvic acid, which is recognized by the A domain of the first kk1B module. The pyrroline-5-carboxylate reductase kk1I is involved in the synthesis of the L-pipecolic acid residue of KK-1 from delta-1-pyrroline-5-carboxylate (P5C), a metabolic intermediate of lysine. It is still unclear how kk1C and kk1D are involved in the production of KK-1. The chain is Nonribosomal peptide synthetase kk1B from Curvularia clavata.